Reading from the N-terminus, the 165-residue chain is MRKIIAEPLTKDAFAPFGDVIEAEEGTSFPINNGKTQRFHDLAKVEVGGENARVMVSIARGQPYDLPLTLNMVERHPLGSQAFMPLTSSPFLVIVCPDESGRPGVPRAFITKPGQGVNYARNTWHGVLTPIGEEQDFLIVDRGGEGNNLEEFFFPEPYEIHLPER.

It belongs to the ureidoglycolate lyase family. As to quaternary structure, homodimer. It depends on Ni(2+) as a cofactor.

The enzyme catalyses (S)-ureidoglycolate = urea + glyoxylate. The protein operates within nitrogen metabolism; (S)-allantoin degradation. In terms of biological role, catalyzes the catabolism of the allantoin degradation intermediate (S)-ureidoglycolate, generating urea and glyoxylate. Involved in the utilization of allantoin as nitrogen source. This Chelativorans sp. (strain BNC1) protein is Ureidoglycolate lyase.